The sequence spans 225 residues: NAD(P)H-quinone oxidoreductase subunit K, chloroplastic (225 aa).

Residues Cys43, Cys44, Cys108, and Cys139 each coordinate [4Fe-4S] cluster.

Belongs to the complex I 20 kDa subunit family. NDH is composed of at least 16 different subunits, 5 of which are encoded in the nucleus. [4Fe-4S] cluster serves as cofactor.

Its subcellular location is the plastid. The protein localises to the chloroplast thylakoid membrane. The enzyme catalyses a plastoquinone + NADH + (n+1) H(+)(in) = a plastoquinol + NAD(+) + n H(+)(out). The catalysed reaction is a plastoquinone + NADPH + (n+1) H(+)(in) = a plastoquinol + NADP(+) + n H(+)(out). In terms of biological role, NDH shuttles electrons from NAD(P)H:plastoquinone, via FMN and iron-sulfur (Fe-S) centers, to quinones in the photosynthetic chain and possibly in a chloroplast respiratory chain. The immediate electron acceptor for the enzyme in this species is believed to be plastoquinone. Couples the redox reaction to proton translocation, and thus conserves the redox energy in a proton gradient. The chain is NAD(P)H-quinone oxidoreductase subunit K, chloroplastic from Solanum bulbocastanum (Wild potato).